A 264-amino-acid chain; its full sequence is S-adenosylmethionine decarboxylase proenzyme (264 aa).

The Schiff-base intermediate with substrate; via pyruvic acid role is filled by S113. S113 is subject to Pyruvic acid (Ser); by autocatalysis. H118 functions as the Proton acceptor; for processing activity in the catalytic mechanism. Catalysis depends on C141, which acts as the Proton donor; for catalytic activity.

It belongs to the prokaryotic AdoMetDC family. Type 2 subfamily. As to quaternary structure, heterooctamer of four alpha and four beta chains arranged as a tetramer of alpha/beta heterodimers. Requires pyruvate as cofactor. Is synthesized initially as an inactive proenzyme. Formation of the active enzyme involves a self-maturation process in which the active site pyruvoyl group is generated from an internal serine residue via an autocatalytic post-translational modification. Two non-identical subunits are generated from the proenzyme in this reaction, and the pyruvate is formed at the N-terminus of the alpha chain, which is derived from the carboxyl end of the proenzyme. The post-translation cleavage follows an unusual pathway, termed non-hydrolytic serinolysis, in which the side chain hydroxyl group of the serine supplies its oxygen atom to form the C-terminus of the beta chain, while the remainder of the serine residue undergoes an oxidative deamination to produce ammonia and the pyruvoyl group blocking the N-terminus of the alpha chain.

The enzyme catalyses S-adenosyl-L-methionine + H(+) = S-adenosyl 3-(methylsulfanyl)propylamine + CO2. It participates in amine and polyamine biosynthesis; S-adenosylmethioninamine biosynthesis; S-adenosylmethioninamine from S-adenosyl-L-methionine: step 1/1. In terms of biological role, catalyzes the decarboxylation of S-adenosylmethionine to S-adenosylmethioninamine (dcAdoMet), the propylamine donor required for the synthesis of the polyamines spermine and spermidine from the diamine putrescine. This chain is S-adenosylmethionine decarboxylase proenzyme, found in Stenotrophomonas maltophilia (strain K279a).